The following is a 138-amino-acid chain: MLLPKRTKFRKMHRGRLKGVATRANTVVFGEFGIQALEPVWLTSRQIEATRRSITRYVRRTGKIWIRVFPDRSVTERAAESRMGAGKGAVSYWVAVVKPGTVLFEINGLSEEMSHQVLKSASYKLPIKTKIISRESGN.

Belongs to the universal ribosomal protein uL16 family. In terms of assembly, part of the 50S ribosomal subunit.

It localises to the plastid. The protein localises to the chloroplast. This Emiliania huxleyi (Coccolithophore) protein is Large ribosomal subunit protein uL16c.